A 582-amino-acid polypeptide reads, in one-letter code: Hemagglutinin-neuraminidase (582 aa).

Residues 1 to 34 are Intravirion-facing; that stretch reads MEPSKLFTMSDNATFAPGPVVNAADKKTFRTCFR. The chain crosses the membrane as a helical span at residues 35 to 55; the sequence is ILVLSVQAVTLILVIVTLGEL. The Virion surface segment spans residues 56 to 582; the sequence is VRMINDQGLS…LPVLTRLTIT (527 aa). Cystine bridges form between Cys-178-Cys-202, Cys-192-Cys-253, and Cys-244-Cys-257. N-linked (GlcNAc...) asparagine; by host glycans are attached at residues Asn-284 and Asn-329. 3 disulfides stabilise this stretch: Cys-350/Cys-471, Cys-382/Cys-392, and Cys-465/Cys-475. N-linked (GlcNAc...) asparagine; by host glycans are attached at residues Asn-400 and Asn-448. Residue Asn-507 is glycosylated (N-linked (GlcNAc...) asparagine; by host). A disulfide bridge links Cys-545 with Cys-556.

This sequence belongs to the paramyxoviruses hemagglutinin-neuraminidase family. As to quaternary structure, homotetramer; composed of disulfide-linked homodimers. Interacts with F protein trimer.

It is found in the virion membrane. The protein localises to the host cell membrane. It carries out the reaction Hydrolysis of alpha-(2-&gt;3)-, alpha-(2-&gt;6)-, alpha-(2-&gt;8)- glycosidic linkages of terminal sialic acid residues in oligosaccharides, glycoproteins, glycolipids, colominic acid and synthetic substrates.. Attaches the virus to alpha-2,3-linked sialic acid-containing cell receptors and thereby initiating infection. Binding of HN protein to the receptor induces a conformational change that allows the F protein to trigger virion/cell membranes fusion. Binds to the glycan motifs sialyl Lewis (SLe) and GM2 ganglioside (GM2-glycan). Its function is as follows. Neuraminidase activity ensures the efficient spread of the virus by dissociating the mature virions from the neuraminic acid containing glycoproteins. This is Hemagglutinin-neuraminidase from Mumps orthorubulavirus (MuV).